The sequence spans 504 residues: Signal recognition particle receptor FtsY (504 aa).

2 disordered regions span residues 1-71 (MFNW…DDYL) and 116-135 (ESDQ…TEIT). GTP-binding positions include 308–315 (GVNGAGKT), 391–395 (DTAGR), and 455–458 (TKLD).

This sequence belongs to the GTP-binding SRP family. FtsY subfamily. Part of the signal recognition particle protein translocation system, which is composed of SRP and FtsY.

It is found in the cell inner membrane. The protein localises to the cytoplasm. It catalyses the reaction GTP + H2O = GDP + phosphate + H(+). Involved in targeting and insertion of nascent membrane proteins into the cytoplasmic membrane. Acts as a receptor for the complex formed by the signal recognition particle (SRP) and the ribosome-nascent chain (RNC). The sequence is that of Signal recognition particle receptor FtsY from Synechocystis sp. (strain ATCC 27184 / PCC 6803 / Kazusa).